The primary structure comprises 1854 residues: MSSSSNSDPSSSPDNTDFIPLKDNPKDTSSYINKKNPFVNDSFDSHDDSYLDNVNPFEYNVADDEDTISMTSDGVEFHNLGITETVDEQDKILSELQLAYPTVSRYSETLDKGLLNGDKTTKGDYTSLRRFRKPFLFDKLSPYFTHFFSEIYAAVLRVVGPPRANETPGRNLPFSPILRQIYNHPLYNIFIFVVIVLHAVLLMIRSDDPHDKSQTIDYLIIVIGILYTLEMLLKIYLFGFLYDGSSSFYDFINSYTKKTPRTMSYLRHSWNRVDFVAIVALWISVIGKKQQGIFRLFSMIACLRLTRLLNITRKTETILKSLKESSTPLVQVVSFNAFFGVMIAILGVQFFKASLNRQCVWLGDYGDQYLPTGQFCGGHWENGIKRAYLDKNGFPSNVNPRGFICAEKSVCRVVENPYSNTVSFDNFFNSLELIFVIMSSNGFTDIMYDIMDAEYFVSCLLFIISAYFLTLWLMSLVIAVVTSSFIDLQHSGKNQKEQKSVDKHLIRNKLCEKYLFYSNFIWISFIVAQFVTLCTQTYDQTSSTANRYLIFYACVDFLLAAEVILRFFAYLPDYRLFFRRYTNLVDIVLAVLNLVTLLPSIRKNPVAFGWLSIFAIARIYRCILLIPYTRKIAKLLFSNFKQLLNLMLFLVIVLFIASLCAVRLFQDLPNDGDSDDDAISFATTYESFLYMYQILTSENWTDVMFAIQARLAHLHLSWIPGAFFTLWFLFSNNVVLSMFIAVIQVNFAPSESDLKMEQLKMYLARLLRNYNPFQASLTLNALIKRNGSRKGKTVDESHYEWLYEDNIIKGFLRVTNIPPKEPLKPSLDTSPELSKYSLAKLSNNFKRFVMRDDPFSQAYFKRVIGIRWEKDMNLKTAAKDMQAAKAFVRIKQTEFLKNHPKYNDVFWVIKPSNRIRRFCQRLVMPGVNERYGGVEPYQWVYRVIQVFIYACILTAVIIECIATPIYERDHLLNDKQHAWFVWTEVAFATIFTIEAAIKIIADGFCITPNAYLRSTWNCIDFFVLVTLWINLYAVLTSHALLSRAFRAFKALRVLRLINLTQTSQRMFHDALISGFFKIFSAAVVSATLLIPFALWAKNVFGGLLYSCNDDNVLSASQCVLEYASTPNNWEVWAPRVWSNPPDYDFDRFPHALLALFEIASIEGWVDIMRSVMDITGFNNQPQTNASSGNAMFFVLFNLVSMIYILTLFIAIIISNYAERTGSAFFTAEQRAWLELRRKIKSMRPSKRPAIRPLGLRGLCYDFAVQKHGIWRRTFTGLYIVHLLFLLTIFYPCPIAYTYVRNSIFLILSICYTINICVKVYGLSFYYFFHSFWNMFDVVVTLGSLTCNIAILAKFENRSLTLLQTTLLVLVTVHLIPKFDNFDQLSKTVVASLPSIFSLIATWIVLYITFAIAFNQIFGLTKLGLNGGPNKNFRSIRNALVLLFTMTFGEGWNDVMHDYTISYPNCVNGDDFYNSDCGNKPWAYGLFIAWNIISMYIFVNMFITVVFDNFSYIHTKSSSFTNLQRNDFRQFKDSWAPFDPMVTGYIPKRNAVKFVLSLRGVYDFRIYRDEHTLRSIISKVQSKTGQQSVPMLENPLMGSEINLEALDQIIDTIDVNVVKERRNVLNSLCTEIMTLPGNVISFSNILMLVVLHKIVDHREAFPISDYIRRAYVLSELEKSIRMEKLLGLVETSIIRKTFLQHMEEKKKALENPFILLSEVSEILPETPIQEVLRQHNADPEQLLMSTRTPSVSDRSFSIVESTVPTIASGEGDDNHSVEDHLKVPTDNEPRRSPSLKEVLLRGSHSLHSNNDRTSFDIEAGFGTAESDFQFGGATEDINRIADRIDDYLDRDSFKG.

Over residues 1–15 (MSSSSNSDPSSSPDN) the composition is skewed to low complexity. Residues 1-33 (MSSSSNSDPSSSPDNTDFIPLKDNPKDTSSYIN) are disordered. The N-linked (GlcNAc...) asparagine glycan is linked to asparagine 40. The next 3 membrane-spanning stretches (helical) occupy residues 184–204 (HPLY…LLMI), 220–240 (IIVI…LFGF), and 274–294 (DFVA…QGIF). The N-linked (GlcNAc...) asparagine glycan is linked to asparagine 310. 8 helical membrane-spanning segments follow: residues 328 to 348 (PLVQ…ILGV), 427 to 447 (FFNS…TDIM), 461 to 481 (LFII…IAVV), 514 to 534 (YLFY…VTLC), 549 to 569 (LIFY…RFFA), 581 to 601 (YTNL…LPSI), 606 to 626 (VAFG…ILLI), and 642 to 662 (QLLN…LCAV). Asparagine 699 is a glycosylation site (N-linked (GlcNAc...) asparagine). Residues 723–743 (FFTLWFLFSNNVVLSMFIAVI) traverse the membrane as a helical segment. Asparagine 786 carries an N-linked (GlcNAc...) asparagine glycan. The next 3 membrane-spanning stretches (helical) occupy residues 946–966 (VFIY…TPIY), 980–1000 (FVWT…IKII), and 1021–1041 (FFVL…HALL). Asparagine 1058 carries N-linked (GlcNAc...) asparagine glycosylation. Helical transmembrane passes span 1075 to 1095 (FFKI…FALW) and 1148 to 1168 (FPHA…VDIM). Asparagine 1184 carries N-linked (GlcNAc...) asparagine glycosylation. Transmembrane regions (helical) follow at residues 1193 to 1213 (FVLF…AIII), 1274 to 1294 (FTGL…PCPI), 1302 to 1322 (SIFL…VYGL), and 1331 to 1351 (FWNM…IAIL). Asparagine 1356 carries an N-linked (GlcNAc...) asparagine glycan. The next 3 membrane-spanning stretches (helical) occupy residues 1358-1378 (SLTL…IPKF), 1393-1413 (PSIF…AIAF), and 1486-1506 (FIAW…TVVF). 2 N-linked (GlcNAc...) asparagine glycosylation sites follow: asparagine 1508 and asparagine 1773. The tract at residues 1764–1792 (TIASGEGDDNHSVEDHLKVPTDNEPRRSP) is disordered. Residues 1771-1790 (DDNHSVEDHLKVPTDNEPRR) show a composition bias toward basic and acidic residues.

It belongs to the calcium channel alpha-1 subunit (TC 1.A.1.11) family. In terms of assembly, interacts with yam8 to form a Ca(2+) influx channel.

The protein resides in the cell membrane. Its function is as follows. Voltage-gated, high-affinity calcium channel that functions together with yam8 to mediate calcium entry into cells. Required during conditions of environmental stress. The protein is Calcium-channel protein cch1 (cch1) of Schizosaccharomyces pombe (strain 972 / ATCC 24843) (Fission yeast).